The primary structure comprises 288 residues: Bifunctional protein FolD (288 aa).

NADP(+) is bound by residues 166 to 168, serine 191, and isoleucine 232; that span reads GRS.

It belongs to the tetrahydrofolate dehydrogenase/cyclohydrolase family. As to quaternary structure, homodimer.

The catalysed reaction is (6R)-5,10-methylene-5,6,7,8-tetrahydrofolate + NADP(+) = (6R)-5,10-methenyltetrahydrofolate + NADPH. It catalyses the reaction (6R)-5,10-methenyltetrahydrofolate + H2O = (6R)-10-formyltetrahydrofolate + H(+). It participates in one-carbon metabolism; tetrahydrofolate interconversion. Functionally, catalyzes the oxidation of 5,10-methylenetetrahydrofolate to 5,10-methenyltetrahydrofolate and then the hydrolysis of 5,10-methenyltetrahydrofolate to 10-formyltetrahydrofolate. The protein is Bifunctional protein FolD of Rickettsia peacockii (strain Rustic).